The primary structure comprises 491 residues: Cyclin-A1-3 (491 aa).

Residues 1 to 21 (MSSSLASRRSSSSSAAKRPAA) are compositionally biased toward low complexity. Disordered regions lie at residues 1–32 (MSSSLASRRSSSSSAAKRPAAGEGGGKAAAGA) and 69–106 (SLASGRNVGTNRVSAVKSASTKPASAISRHESAPQKES). The segment covering 75 to 91 (NVGTNRVSAVKSASTKP) has biased composition (polar residues).

It belongs to the cyclin family. Cyclin AB subfamily.

This Oryza sativa subsp. japonica (Rice) protein is Cyclin-A1-3 (CYCA1-3).